A 294-amino-acid chain; its full sequence is Ribosomal protein L11 methyltransferase (294 aa).

Threonine 144, glycine 165, aspartate 187, and asparagine 229 together coordinate S-adenosyl-L-methionine.

This sequence belongs to the methyltransferase superfamily. PrmA family.

It is found in the cytoplasm. The catalysed reaction is L-lysyl-[protein] + 3 S-adenosyl-L-methionine = N(6),N(6),N(6)-trimethyl-L-lysyl-[protein] + 3 S-adenosyl-L-homocysteine + 3 H(+). Its function is as follows. Methylates ribosomal protein L11. This is Ribosomal protein L11 methyltransferase from Pseudomonas aeruginosa (strain LESB58).